The sequence spans 341 residues: 4-hydroxy-2-oxovalerate aldolase 3 (341 aa).

A Pyruvate carboxyltransferase domain is found at 5-257 (ITLHDMTLRD…ETGVDVYRIA (253 aa)). Position 13–14 (13–14 (RD)) interacts with substrate. Asp-14 contacts Mn(2+). Residue His-17 is the Proton acceptor of the active site. Residues Ser-167 and His-196 each contribute to the substrate site. His-196 and His-198 together coordinate Mn(2+). A substrate-binding site is contributed by Tyr-287.

Belongs to the 4-hydroxy-2-oxovalerate aldolase family.

It catalyses the reaction (S)-4-hydroxy-2-oxopentanoate = acetaldehyde + pyruvate. The polypeptide is 4-hydroxy-2-oxovalerate aldolase 3 (bpHI) (Cupriavidus necator (strain ATCC 17699 / DSM 428 / KCTC 22496 / NCIMB 10442 / H16 / Stanier 337) (Ralstonia eutropha)).